Here is a 144-residue protein sequence, read N- to C-terminus: Large ribosomal subunit protein uL15 (144 aa).

The segment at 1-48 (MIKLEYLQDPSPRKRRTKLLGRGPSSGHGKTSGRGHKGDGSRSGYKRR) is disordered.

Belongs to the universal ribosomal protein uL15 family. In terms of assembly, part of the 50S ribosomal subunit.

Functionally, binds to the 23S rRNA. The polypeptide is Large ribosomal subunit protein uL15 (Chlamydia muridarum (strain MoPn / Nigg)).